The following is a 404-amino-acid chain: Inosine-5'-monophosphate dehydrogenase (404 aa).

NAD(+) contacts are provided by residues Asp-172 and 222-224 (GIG). K(+) is bound by residues Gly-224 and Gly-226. Ser-227 contacts IMP. Position 229 (Cys-229) interacts with K(+). Cys-229 functions as the Thioimidate intermediate in the catalytic mechanism. Residues 262 to 264 (DGG), 285 to 286 (GN), and 309 to 313 (YVGMG) contribute to the IMP site. Residue Arg-325 is the Proton acceptor of the active site. An IMP-binding site is contributed by Glu-340. K(+) contacts are provided by Glu-394, Ser-395, and His-396.

This sequence belongs to the IMPDH/GMPR family. Homotetramer. The cofactor is K(+).

The enzyme catalyses IMP + NAD(+) + H2O = XMP + NADH + H(+). It functions in the pathway purine metabolism; XMP biosynthesis via de novo pathway; XMP from IMP: step 1/1. With respect to regulation, mycophenolic acid (MPA) is a non-competitive inhibitor that prevents formation of the closed enzyme conformation by binding to the same site as the amobile flap. In contrast, mizoribine monophosphate (MZP) is a competitive inhibitor that induces the closed conformation. MPA is a potent inhibitor of mammalian IMPDHs but a poor inhibitor of the bacterial enzymes. MZP is a more potent inhibitor of bacterial IMPDH. Functionally, catalyzes the conversion of inosine 5'-phosphate (IMP) to xanthosine 5'-phosphate (XMP), the first committed and rate-limiting step in the de novo synthesis of guanine nucleotides, and therefore plays an important role in the regulation of cell growth. Essential for mouse infection by tick bite and critical for the survival in environments that appear to lack sufficient amounts of guanine, guanosine, and/or deoxyguanosine to support spirochete growth, such as mammalian host tissues. In Borreliella burgdorferi (strain ATCC 35210 / DSM 4680 / CIP 102532 / B31) (Borrelia burgdorferi), this protein is Inosine-5'-monophosphate dehydrogenase.